A 707-amino-acid polypeptide reads, in one-letter code: G protein-coupled receptor kinase 2 (707 aa).

The N-terminal stretch occupies residues 1-190 (MADLEAVLAD…ELNMQLTMND (190 aa)). One can recognise an RGS domain in the interval 54–175 (KFDKIFNQKL…LESDKFTRFC (122 aa)). The 265-residue stretch at 191–455 (FSVHRIIGRG…PTEVKEHPFF (265 aa)) folds into the Protein kinase domain. ATP contacts are provided by residues 197–205 (IGRGGFGEV) and lysine 220. The Proton acceptor role is filled by aspartate 318. One can recognise an AGC-kinase C-terminal domain in the interval 456–523 (KDVDWQTVYL…VISERWQNEI (68 aa)). The PH domain maps to 558 to 658 (DVIVHGYIKK…WHTSLRTAHK (101 aa)).

This sequence belongs to the protein kinase superfamily. AGC Ser/Thr protein kinase family. GPRK subfamily. Interacts with amx-2; the interaction promotes phosphorylation of amx-2. Expressed in many neurons in the adult including the ASH neurons and other sensory neurons, many interneurons, and motor neurons of the ventral nerve cord. Expressed broadly in head neurons and is detected in several head acetylcholine neurons including the AVA, AVB, AVD and AVE premotor interneurons, the SMD and RMD head motor neurons, and the AIN, AIY, SIA, SIB and SAA interneurons. Expressed in HSN motor neurons and VC4/VC5 motor neurons. Also expressed in vulval muscle cells. Expressed in premotor and RIS interneurons. Expressed in ciliated neurons such as AWA, AWB, AWC, ASH and ADF olfactory and nociceptive neurons, and in chemosensory ASH neurons. Expressed in RMG neurons and AVK interneurons.

It carries out the reaction [G-protein-coupled receptor] + ATP = [G-protein-coupled receptor]-phosphate + ADP + H(+). Its function is as follows. Specifically phosphorylates the activated forms of G protein-coupled receptors. Required in adult sensory neurons for chemotaxis. Plays a role in the ASH sensory neurons in the chemotaxis response to NaCl where it is likely to modulate the strength of the NaCl avoidance response which occurs at high NaCl concentrations. Required in the HSN motor neurons for normal egg laying by promoting phosphorylation of amine oxidase amx-2 which inhibits amx-2 activity, preventing metabolism of serotonin. Acts in head acetylcholine neurons to positively regulate locomotion. Inactivates dopamine receptor dop-3 which leads to inactivation of guanine nucleotide-binding protein G(o) subunit goa-1 and activation of the unc-77/nca-1 and nca-2 ion channel proteins. Acts as a positive regulator of swimming by inactivating two dopamine receptors, dop-3 in the premotor interneurons that negatively controls early swimming through the nca ion channel, and dop-1 in the RIS neuron that inhibits late-stage swimming via the signaling of FMRFamide-like neuropeptide flp-11. Controls movement quiescence by negatively regulating multiple targets including egl-4 in ciliated neurons, the level of ligands of the neuropeptide receptor npr-1 in RMG neurons, and the secretion of flp-1 from AVK interneurons. The chain is G protein-coupled receptor kinase 2 (grk-2) from Caenorhabditis elegans.